The chain runs to 426 residues: Mothers against decapentaplegic homolog 7 (426 aa).

Residues 13-55 (LWRSRAPGGEDEEEGAGGGGGGGELRGEGATDSRAHGAGGGGP) are disordered. Residues 37 to 47 (LRGEGATDSRA) are compositionally biased toward basic and acidic residues. Residues lysine 64 and lysine 70 each carry the N6-acetyllysine; alternate modification. Residues lysine 64 and lysine 70 each participate in a glycyl lysine isopeptide (Lys-Gly) (interchain with G-Cter in ubiquitin); alternate cross-link. Residues 64–207 (KAVRGAKGHH…LSRLCELESP (144 aa)) enclose the MH1 domain. Positions 125, 180, 192, and 197 each coordinate Zn(2+). Residues 208–211 (PPPY) carry the PY-motif motif. The important for interaction with SMURF2 stretch occupies residues 208-217 (PPPYSRYPMD). At serine 249 the chain carries Phosphoserine. Residues 261-426 (WCVVAYWEEK…CWLEVIFNSR (166 aa)) form the MH2 domain.

This sequence belongs to the dwarfin/SMAD family. As to quaternary structure, interacts with WWP1. Interacts with COPS5. Interacts with NEDD4L. Interacts with STAMBP. Interacts with RNF111, AXIN1 and AXIN2. Interacts with PPP1R15A. Interacts (via MH2 domain) with EP300. Interacts with ACVR1B, SMURF1, SMURF2 and TGFBR1; SMAD7 recruits SMURF1 and SMURF2 to the TGF-beta receptor and regulates its degradation. Interacts with PDPK1 (via PH domain). Interacts with TSC22D1/TSC-22; the interaction requires TGF-beta and the interaction is inhibited by TGFBR1. Phosphorylation on Ser-249 does not affect its stability, nuclear localization or inhibitory function in TGFB signaling; however it affects its ability to regulate transcription. Phosphorylated by PDPK1. In terms of processing, ubiquitinated by WWP1. Polyubiquitinated by RNF111, which is enhanced by AXIN1 and promotes proteasomal degradation. In response to TGF-beta, ubiquitinated by SMURF1; which promotes its degradation. Post-translationally, acetylation prevents ubiquitination and degradation mediated by SMURF1. In terms of tissue distribution, ubiquitous with higher expression in the lung and vascular endothelium.

The protein resides in the nucleus. It localises to the cytoplasm. Antagonist of signaling by TGF-beta (transforming growth factor) type 1 receptor superfamily members; has been shown to inhibit TGF-beta (Transforming growth factor) and activin signaling by associating with their receptors thus preventing SMAD2 access. Functions as an adapter to recruit SMURF2 to the TGF-beta receptor complex. Also acts by recruiting the PPP1R15A-PP1 complex to TGFBR1, which promotes its dephosphorylation. Positively regulates PDPK1 kinase activity by stimulating its dissociation from the 14-3-3 protein YWHAQ which acts as a negative regulator. This is Mothers against decapentaplegic homolog 7 (SMAD7) from Homo sapiens (Human).